The sequence spans 272 residues: Probable prolyl 4-hydroxylase 11 (272 aa).

The Cytoplasmic portion of the chain corresponds to 1-55 (MSKSTSVSTILYLRQRLQGLKIYETSDLIQHINTFDELVGEQVSVDVKIEEKTKD). The chain crosses the membrane as a helical; Signal-anchor for type II membrane protein span at residues 56–80 (MILLCSLSPLLTTLTCSMVKVAASL). Over 81-272 (RFPNERWLEV…KRHCLSLNLF (192 aa)) the chain is Lumenal. Residues 179-272 (NGETLQVINY…KRHCLSLNLF (94 aa)) form the Fe2OG dioxygenase domain. Residues H197, D199, and H261 each contribute to the Fe cation site.

Belongs to the P4HA family. Fe(2+) is required as a cofactor. L-ascorbate serves as cofactor.

The protein localises to the endoplasmic reticulum membrane. The catalysed reaction is L-prolyl-[collagen] + 2-oxoglutarate + O2 = trans-4-hydroxy-L-prolyl-[collagen] + succinate + CO2. Functionally, catalyzes the post-translational formation of 4-hydroxyproline in -Xaa-Pro-Gly- sequences in proline-rich peptide sequences of plant glycoproteins and other proteins. Hydroxyprolines are important constituent of many plant cell wall glycoproteins such as extensins, hydroxyproline-rich glycoproteins, lectins and arabinogalactan proteins. The chain is Probable prolyl 4-hydroxylase 11 from Arabidopsis thaliana (Mouse-ear cress).